A 92-amino-acid polypeptide reads, in one-letter code: DNA-directed RNA polymerase subunit omega (92 aa).

The protein belongs to the RNA polymerase subunit omega family. The RNAP catalytic core consists of 2 alpha, 1 beta, 1 beta' and 1 omega subunit. When a sigma factor is associated with the core the holoenzyme is formed, which can initiate transcription.

The enzyme catalyses RNA(n) + a ribonucleoside 5'-triphosphate = RNA(n+1) + diphosphate. Functionally, promotes RNA polymerase assembly. Latches the N- and C-terminal regions of the beta' subunit thereby facilitating its interaction with the beta and alpha subunits. The chain is DNA-directed RNA polymerase subunit omega from Shewanella denitrificans (strain OS217 / ATCC BAA-1090 / DSM 15013).